Reading from the N-terminus, the 525-residue chain is GMP synthase [glutamine-hydrolyzing] (525 aa).

Residues 9-207 (RILILDFGSQ…VRDICQCEAL (199 aa)) enclose the Glutamine amidotransferase type-1 domain. The active-site Nucleophile is C86. Residues H181 and E183 contribute to the active site. Positions 208 to 400 (WTPAKIIDDA…LGLPYDMLYR (193 aa)) constitute a GMPS ATP-PPase domain. ATP is bound at residue 235 to 241 (SGGVDSS).

Homodimer.

The enzyme catalyses XMP + L-glutamine + ATP + H2O = GMP + L-glutamate + AMP + diphosphate + 2 H(+). The protein operates within purine metabolism; GMP biosynthesis; GMP from XMP (L-Gln route): step 1/1. In terms of biological role, catalyzes the synthesis of GMP from XMP. The sequence is that of GMP synthase [glutamine-hydrolyzing] from Shigella flexneri.